The primary structure comprises 1160 residues: Pesticidal crystal protein Cry1Db (1160 aa).

Belongs to the delta endotoxin family.

Functionally, promotes colloidosmotic lysis by binding to the midgut epithelial cells of insects. The sequence is that of Pesticidal crystal protein Cry1Db (cry1Db) from Bacillus thuringiensis.